A 23-amino-acid polypeptide reads, in one-letter code: Alyteserin-1a (23 aa).

Residue asparagine 23 is modified to Asparagine amide.

As to expression, expressed by the skin glands.

Its subcellular location is the secreted. The protein resides in the target cell membrane. Functionally, antibacterial peptide with amphipathic alpha-helical structure. Shows selective growth inhibitory activity against the Gram-negative bacteria E.coli (MIC=25 uM) Has a weak hemolytic activity against human erythrocytes (LC(50)&gt;100 uM). Is very weakly active against S.aureus (MIC=200 uM). The chain is Alyteserin-1a from Alytes obstetricans (Common midwife toad).